Here is a 179-residue protein sequence, read N- to C-terminus: Large ribosomal subunit protein uL5 (179 aa).

Belongs to the universal ribosomal protein uL5 family. Part of the 50S ribosomal subunit; part of the 5S rRNA/L5/L18/L25 subcomplex. Contacts the 5S rRNA and the P site tRNA. Forms a bridge to the 30S subunit in the 70S ribosome.

Its function is as follows. This is one of the proteins that bind and probably mediate the attachment of the 5S RNA into the large ribosomal subunit, where it forms part of the central protuberance. In the 70S ribosome it contacts protein S13 of the 30S subunit (bridge B1b), connecting the 2 subunits; this bridge is implicated in subunit movement. Contacts the P site tRNA; the 5S rRNA and some of its associated proteins might help stabilize positioning of ribosome-bound tRNAs. The polypeptide is Large ribosomal subunit protein uL5 (Pseudomonas fluorescens (strain ATCC BAA-477 / NRRL B-23932 / Pf-5)).